The primary structure comprises 147 residues: uncharacterized protein (147 aa).

Residues 52–145 (YDRCLLIIDA…WLSNNYPTVC (94 aa)) enclose the Rhodanese domain.

This is an uncharacterized protein from Buchnera aphidicola subsp. Baizongia pistaciae (strain Bp).